A 1023-amino-acid polypeptide reads, in one-letter code: Cell division cycle-associated protein 2 (1023 aa).

Over residues 1–14 (MDANSKDKPPETKE) the composition is skewed to basic and acidic residues. The interval 1–21 (MDANSKDKPPETKESAMNNAG) is disordered. A phosphoserine mark is found at Ser-98, Ser-120, Ser-126, Ser-131, Ser-210, Ser-291, and Ser-309. At Thr-312 the chain carries Phosphothreonine. One can recognise a PP1-binding domain in the interval 389 to 449 (KRKRVTFGED…PEPLPQPDFD (61 aa)). A phosphoserine mark is found at Ser-400 and Ser-407. Thr-412 bears the Phosphothreonine mark. Ser-437 is subject to Phosphoserine. The tract at residues 542–580 (SQETKCTKRALPKKSQVLKSCRKKKGKGKKSVQKSLYGE) is disordered. A compositionally biased stretch (basic residues) spans 561 to 573 (SCRKKKGKGKKSV). Residues Ser-591 and Ser-614 each carry the phosphoserine modification. The tract at residues 667–729 (SSLGNATSDE…ERVASDSPKP (63 aa)) is disordered. Residues 679–691 (NTNIMNINENKNI) show a composition bias toward low complexity. A compositionally biased stretch (basic and acidic residues) spans 696 to 706 (NKSESENEPKA). Phosphoserine occurs at positions 710 and 756. Lys-762 participates in a covalent cross-link: Glycyl lysine isopeptide (Lys-Gly) (interchain with G-Cter in SUMO2). Basic and acidic residues predominate over residues 803 to 816 (ESKSQSEDLGRKPM). Disordered stretches follow at residues 803-860 (ESKS…GSSV) and 936-1023 (SPIK…ERKQ). Phosphoserine is present on residues Ser-936 and Ser-977. Polar residues-rich tracts occupy residues 979 to 992 (CIST…TSQF) and 1000 to 1010 (SLNGKGESSLT). Ser-1000 bears the Phosphoserine mark. A compositionally biased stretch (basic and acidic residues) spans 1013 to 1023 (ERIEHNGERKQ).

As to quaternary structure, interacts with PPP1CC. Post-translationally, phosphorylated by CDK1. May regulate its subcellular location. In terms of tissue distribution, ubiquitously expressed.

The protein resides in the nucleus. In terms of biological role, regulator of chromosome structure during mitosis required for condensin-depleted chromosomes to retain their compact architecture through anaphase. Acts by mediating the recruitment of phopsphatase PP1-gamma subunit (PPP1CC) to chromatin at anaphase and into the following interphase. At anaphase onset, its association with chromatin targets a pool of PPP1CC to dephosphorylate substrates. This chain is Cell division cycle-associated protein 2 (CDCA2), found in Homo sapiens (Human).